We begin with the raw amino-acid sequence, 141 residues long: Hemoglobin subunit alpha-A (141 aa).

The 141-residue stretch at 1-141 (VLSAADKNNV…VGNVLTAKYR (141 aa)) folds into the Globin domain. His58 contributes to the O2 binding site. His87 is a binding site for heme b.

Belongs to the globin family. Heterotetramer of two alpha chains and two beta chains. In terms of tissue distribution, red blood cells.

In terms of biological role, involved in oxygen transport from the lung to the various peripheral tissues. The protein is Hemoglobin subunit alpha-A (HBAA) of Francolinus pondicerianus (Grey francolin).